The following is a 304-amino-acid chain: tRNA uridine(34) hydroxylase (304 aa).

The 96-residue stretch at glutamine 124–serine 219 folds into the Rhodanese domain. Cysteine 179 functions as the Cysteine persulfide intermediate in the catalytic mechanism.

The protein belongs to the TrhO family.

It carries out the reaction uridine(34) in tRNA + AH2 + O2 = 5-hydroxyuridine(34) in tRNA + A + H2O. Its function is as follows. Catalyzes oxygen-dependent 5-hydroxyuridine (ho5U) modification at position 34 in tRNAs. The chain is tRNA uridine(34) hydroxylase from Bartonella henselae (strain ATCC 49882 / DSM 28221 / CCUG 30454 / Houston 1) (Rochalimaea henselae).